A 120-amino-acid chain; its full sequence is Large ribosomal subunit protein uL18 (120 aa).

Belongs to the universal ribosomal protein uL18 family. In terms of assembly, part of the 50S ribosomal subunit; part of the 5S rRNA/L5/L18/L25 subcomplex. Contacts the 5S and 23S rRNAs.

Its function is as follows. This is one of the proteins that bind and probably mediate the attachment of the 5S RNA into the large ribosomal subunit, where it forms part of the central protuberance. This chain is Large ribosomal subunit protein uL18, found in Methylobacterium nodulans (strain LMG 21967 / CNCM I-2342 / ORS 2060).